Consider the following 345-residue polypeptide: Histidinol-phosphate aminotransferase (345 aa).

Residue lysine 205 is modified to N6-(pyridoxal phosphate)lysine.

This sequence belongs to the class-II pyridoxal-phosphate-dependent aminotransferase family. Histidinol-phosphate aminotransferase subfamily. As to quaternary structure, homodimer. Pyridoxal 5'-phosphate is required as a cofactor.

It catalyses the reaction L-histidinol phosphate + 2-oxoglutarate = 3-(imidazol-4-yl)-2-oxopropyl phosphate + L-glutamate. Its pathway is amino-acid biosynthesis; L-histidine biosynthesis; L-histidine from 5-phospho-alpha-D-ribose 1-diphosphate: step 7/9. In Parabacteroides distasonis (strain ATCC 8503 / DSM 20701 / CIP 104284 / JCM 5825 / NCTC 11152), this protein is Histidinol-phosphate aminotransferase.